A 190-amino-acid chain; its full sequence is Prostaglandin-H2 D-isomerase (190 aa).

An N-terminal signal peptide occupies residues 1-22 (MATHHTLWMGLALLGVLGDLQA). Residue asparagine 51 is glycosylated (N-linked (GlcNAc...) asparagine). Cysteine 65 acts as the Nucleophile in catalysis. N-linked (GlcNAc...) asparagine glycosylation is present at asparagine 78. Cysteine 89 and cysteine 186 form a disulfide bridge.

It belongs to the calycin superfamily. Lipocalin family. Monomer.

The protein resides in the rough endoplasmic reticulum. It is found in the nucleus membrane. Its subcellular location is the golgi apparatus. The protein localises to the cytoplasm. It localises to the perinuclear region. The protein resides in the secreted. The catalysed reaction is prostaglandin H2 = prostaglandin D2. In terms of biological role, catalyzes the conversion of PGH2 to PGD2, a prostaglandin involved in smooth muscle contraction/relaxation and a potent inhibitor of platelet aggregation. Involved in a variety of CNS functions, such as sedation, NREM sleep and PGE2-induced allodynia, and may have an anti-apoptotic role in oligodendrocytes. Binds small non-substrate lipophilic molecules, including biliverdin, bilirubin, retinal, retinoic acid and thyroid hormone, and may act as a scavenger for harmful hydrophobic molecules and as a secretory retinoid and thyroid hormone transporter. Possibly involved in development and maintenance of the blood-brain, blood-retina, blood-aqueous humor and blood-testis barrier. It is likely to play important roles in both maturation and maintenance of the central nervous system and male reproductive system. Involved in PLA2G3-dependent maturation of mast cells. PLA2G3 is secreted by immature mast cells and acts on nearby fibroblasts upstream to PTDGS to synthesize PGD2, which in turn promotes mast cell maturation and degranulation via PTGDR. The protein is Prostaglandin-H2 D-isomerase (PTGDS) of Gorilla gorilla gorilla (Western lowland gorilla).